The following is a 380-amino-acid chain: DNA replication and repair protein RecF (380 aa).

30–37 contributes to the ATP binding site; it reads GNNAQGKS.

This sequence belongs to the RecF family.

The protein resides in the cytoplasm. In terms of biological role, the RecF protein is involved in DNA metabolism; it is required for DNA replication and normal SOS inducibility. RecF binds preferentially to single-stranded, linear DNA. It also seems to bind ATP. The sequence is that of DNA replication and repair protein RecF from Crocosphaera subtropica (strain ATCC 51142 / BH68) (Cyanothece sp. (strain ATCC 51142)).